Reading from the N-terminus, the 45-residue chain is Large ribosomal subunit protein bL34 (45 aa).

It belongs to the bacterial ribosomal protein bL34 family.

This is Large ribosomal subunit protein bL34 from Salinispora arenicola (strain CNS-205).